The sequence spans 212 residues: MSLGLVGRKVGMTRIFADDGRSIPVTVLDVSDNKVTQIKTPEADGYSAVQVAFGKRRASRVVKPIAGHLAKAGVEPSRVLKEFRVEPEGLASLKAGDQVSVEIFSVGQKVDVTGVSIGKGFSGPIKRHNFSSNRASHGNSVSHNSPGSIGMAQDPGRVFPGKRMAGQYGAVQRTTLGLEVVRVDAERQLLLVKGAVPGAKGGDVVVRPAIKA.

Gln153 carries the post-translational modification N5-methylglutamine.

This sequence belongs to the universal ribosomal protein uL3 family. As to quaternary structure, part of the 50S ribosomal subunit. Forms a cluster with proteins L14 and L19. In terms of processing, methylated by PrmB.

In terms of biological role, one of the primary rRNA binding proteins, it binds directly near the 3'-end of the 23S rRNA, where it nucleates assembly of the 50S subunit. The sequence is that of Large ribosomal subunit protein uL3 from Azoarcus sp. (strain BH72).